The primary structure comprises 143 residues: uncharacterized protein (143 aa).

The segment at 1-37 (MSAPASSSAIAPSQPTAPGHARHSASWSASASDPSGA) is disordered.

This sequence belongs to the dynein light chain Tctex-type family.

This is an uncharacterized protein from Mycosarcoma maydis (Corn smut fungus).